The following is a 323-amino-acid chain: Secreted frizzled-related protein 3 (323 aa).

An N-terminal signal peptide occupies residues 1 to 32 (MVCCGPGRMLLGWAGLLVLAALCLLQVPGAQA). In terms of domain architecture, FZ spans 33–150 (AACEPVRIPL…VYDRGVCISP (118 aa)). Intrachain disulfides connect Cys-35–Cys-96, Cys-43–Cys-89, Cys-80–Cys-119, Cys-108–Cys-147, and Cys-112–Cys-136. The N-linked (GlcNAc...) asparagine glycan is linked to Asn-49. One can recognise an NTR domain in the interval 178–298 (CKCKPVRATQ…WDMKLRHLGL (121 aa)). The tract at residues 299–323 (GKTDASDSTQNQKSGRNSNPRPARS) is disordered. The segment covering 304–323 (SDSTQNQKSGRNSNPRPARS) has biased composition (polar residues).

The protein belongs to the secreted frizzled-related protein (sFRP) family. In terms of assembly, interacts with MYOC. In terms of tissue distribution, expressed in kidney, brain, testis. Weak expression in spleen and heart.

It is found in the secreted. Functionally, soluble frizzled-related proteins (sFRPS) function as modulators of Wnt signaling through direct interaction with Wnts. They have a role in regulating cell growth and differentiation in specific cell types. SFRP3/FRZB appears to be involved in limb skeletogenesis. Antagonist of Wnt8 signaling. Regulates chondrocyte maturation and long bone development. In Mus musculus (Mouse), this protein is Secreted frizzled-related protein 3 (Frzb).